Here is a 286-residue protein sequence, read N- to C-terminus: Bifunctional protein FolD (286 aa).

NADP(+) is bound by residues 165-167 (GRS), S190, and V231.

This sequence belongs to the tetrahydrofolate dehydrogenase/cyclohydrolase family. As to quaternary structure, homodimer.

It catalyses the reaction (6R)-5,10-methylene-5,6,7,8-tetrahydrofolate + NADP(+) = (6R)-5,10-methenyltetrahydrofolate + NADPH. The enzyme catalyses (6R)-5,10-methenyltetrahydrofolate + H2O = (6R)-10-formyltetrahydrofolate + H(+). It participates in one-carbon metabolism; tetrahydrofolate interconversion. Functionally, catalyzes the oxidation of 5,10-methylenetetrahydrofolate to 5,10-methenyltetrahydrofolate and then the hydrolysis of 5,10-methenyltetrahydrofolate to 10-formyltetrahydrofolate. This Bacillus cereus (strain ZK / E33L) protein is Bifunctional protein FolD.